We begin with the raw amino-acid sequence, 444 residues long: N-succinylarginine dihydrolase (444 aa).

Substrate is bound by residues 19–28 (AGLSFGNVAS), asparagine 110, and 137–138 (HR). Glutamate 174 is a catalytic residue. Arginine 214 contributes to the substrate binding site. Residue histidine 250 is part of the active site. Substrate is bound by residues aspartate 252 and asparagine 362. The Nucleophile role is filled by cysteine 368.

This sequence belongs to the succinylarginine dihydrolase family. As to quaternary structure, homodimer.

The enzyme catalyses N(2)-succinyl-L-arginine + 2 H2O + 2 H(+) = N(2)-succinyl-L-ornithine + 2 NH4(+) + CO2. It participates in amino-acid degradation; L-arginine degradation via AST pathway; L-glutamate and succinate from L-arginine: step 2/5. Functionally, catalyzes the hydrolysis of N(2)-succinylarginine into N(2)-succinylornithine, ammonia and CO(2). This Shewanella baltica (strain OS223) protein is N-succinylarginine dihydrolase.